The following is a 137-amino-acid chain: MANQLSAEELKKKLSEMQFYVTQNRGTEPPFTGRLLHNKRDGVYHCLVCEAPLFHSHTKYDSGCGWPSFYQPVSKEAIRYIDDFSHGMQRVEIRCGNCDAHLGHVFPDGPQPTGERYCVNSASLAFSDEKNGDQLKG.

The MsrB domain maps to 7 to 129 (AEELKKKLSE…NSASLAFSDE (123 aa)). Zn(2+) contacts are provided by Cys-46, Cys-49, Cys-95, and Cys-98. The active-site Nucleophile is Cys-118.

It belongs to the MsrB Met sulfoxide reductase family. Requires Zn(2+) as cofactor.

The enzyme catalyses L-methionyl-[protein] + [thioredoxin]-disulfide + H2O = L-methionyl-(R)-S-oxide-[protein] + [thioredoxin]-dithiol. The sequence is that of Peptide methionine sulfoxide reductase MsrB from Salmonella arizonae (strain ATCC BAA-731 / CDC346-86 / RSK2980).